Reading from the N-terminus, the 631-residue chain is DDB1- and CUL4-associated factor 8-like protein 2 (631 aa).

Disordered stretches follow at residues 1 to 91 (MSHQ…EDFE) and 108 to 163 (EEET…HEQY). Residues 44 to 54 (SELSVTVTGDG) show a composition bias toward polar residues. Acidic residues-rich tracts occupy residues 77–88 (SASEDIELESLE) and 108–147 (EEET…EEEE). WD repeat units follow at residues 226–265 (DHVG…PVLN), 269–310 (GHTN…YFNN), 316–356 (QHRG…PASK), 364–404 (DKKV…KKEN), 420–459 (DFPT…GAQY), 467–507 (RNNT…IIQF), and 511–550 (SREG…ATEL). Residues 594-631 (QDWRSGEAEFPDEESDESSSTSETSEEEVQDRVQCMPS) form a disordered region.

It belongs to the WD repeat DCAF8 family.

This chain is DDB1- and CUL4-associated factor 8-like protein 2 (DCAF8L2), found in Homo sapiens (Human).